The sequence spans 128 residues: Ribonuclease P protein component 4 (128 aa).

4 residues coordinate Zn(2+): Cys67, Cys70, Cys96, and Cys99.

The protein belongs to the eukaryotic/archaeal RNase P protein component 4 family. As to quaternary structure, consists of a catalytic RNA component and at least 4-5 protein subunits. Zn(2+) serves as cofactor.

The protein localises to the cytoplasm. The catalysed reaction is Endonucleolytic cleavage of RNA, removing 5'-extranucleotides from tRNA precursor.. Part of ribonuclease P, a protein complex that generates mature tRNA molecules by cleaving their 5'-ends. The chain is Ribonuclease P protein component 4 from Methanopyrus kandleri (strain AV19 / DSM 6324 / JCM 9639 / NBRC 100938).